Here is an 816-residue protein sequence, read N- to C-terminus: Lon protease (816 aa).

The Lon N-terminal domain maps to 27-221; that stretch reads LPLLPIRDVV…KVNDLLAREH (195 aa). 372-379 is an ATP binding site; that stretch reads GPPGVGKT. The 182-residue stretch at 608 to 789 folds into the Lon proteolytic domain; sequence KNEVGVVNGL…DEVLKLALEK (182 aa). Catalysis depends on residues Ser-695 and Lys-738. The tract at residues 795–816 is disordered; that stretch reads PKGKAKPATPKVVVRPSKEISA. Low complexity predominate over residues 800-809; the sequence is KPATPKVVVR.

Belongs to the peptidase S16 family. In terms of assembly, homohexamer. Organized in a ring with a central cavity.

Its subcellular location is the cytoplasm. The enzyme catalyses Hydrolysis of proteins in presence of ATP.. Functionally, ATP-dependent serine protease that mediates the selective degradation of mutant and abnormal proteins as well as certain short-lived regulatory proteins. Required for cellular homeostasis and for survival from DNA damage and developmental changes induced by stress. Degrades polypeptides processively to yield small peptide fragments that are 5 to 10 amino acids long. Binds to DNA in a double-stranded, site-specific manner. The protein is Lon protease of Trichlorobacter lovleyi (strain ATCC BAA-1151 / DSM 17278 / SZ) (Geobacter lovleyi).